Reading from the N-terminus, the 579-residue chain is Proline--tRNA ligase (579 aa).

This sequence belongs to the class-II aminoacyl-tRNA synthetase family. ProS type 1 subfamily. Homodimer.

Its subcellular location is the cytoplasm. It carries out the reaction tRNA(Pro) + L-proline + ATP = L-prolyl-tRNA(Pro) + AMP + diphosphate. Its function is as follows. Catalyzes the attachment of proline to tRNA(Pro) in a two-step reaction: proline is first activated by ATP to form Pro-AMP and then transferred to the acceptor end of tRNA(Pro). As ProRS can inadvertently accommodate and process non-cognate amino acids such as alanine and cysteine, to avoid such errors it has two additional distinct editing activities against alanine. One activity is designated as 'pretransfer' editing and involves the tRNA(Pro)-independent hydrolysis of activated Ala-AMP. The other activity is designated 'posttransfer' editing and involves deacylation of mischarged Ala-tRNA(Pro). The misacylated Cys-tRNA(Pro) is not edited by ProRS. This Chlamydia muridarum (strain MoPn / Nigg) protein is Proline--tRNA ligase.